Consider the following 176-residue polypeptide: Large ribosomal subunit protein uL6 (176 aa).

The protein belongs to the universal ribosomal protein uL6 family. In terms of assembly, part of the 50S ribosomal subunit.

Functionally, this protein binds to the 23S rRNA, and is important in its secondary structure. It is located near the subunit interface in the base of the L7/L12 stalk, and near the tRNA binding site of the peptidyltransferase center. The polypeptide is Large ribosomal subunit protein uL6 (Lacticaseibacillus paracasei (strain ATCC 334 / BCRC 17002 / CCUG 31169 / CIP 107868 / KCTC 3260 / NRRL B-441) (Lactobacillus paracasei)).